We begin with the raw amino-acid sequence, 424 residues long: Serine--tRNA ligase (424 aa).

231–233 (TAE) lines the L-serine pocket. An ATP-binding site is contributed by 262–264 (RSE). Residue E285 participates in L-serine binding. ATP is bound at residue 349-352 (EISS). S385 provides a ligand contact to L-serine.

It belongs to the class-II aminoacyl-tRNA synthetase family. Type-1 seryl-tRNA synthetase subfamily. Homodimer. The tRNA molecule binds across the dimer.

The protein resides in the cytoplasm. The catalysed reaction is tRNA(Ser) + L-serine + ATP = L-seryl-tRNA(Ser) + AMP + diphosphate + H(+). It catalyses the reaction tRNA(Sec) + L-serine + ATP = L-seryl-tRNA(Sec) + AMP + diphosphate + H(+). It participates in aminoacyl-tRNA biosynthesis; selenocysteinyl-tRNA(Sec) biosynthesis; L-seryl-tRNA(Sec) from L-serine and tRNA(Sec): step 1/1. Functionally, catalyzes the attachment of serine to tRNA(Ser). Is also able to aminoacylate tRNA(Sec) with serine, to form the misacylated tRNA L-seryl-tRNA(Sec), which will be further converted into selenocysteinyl-tRNA(Sec). The polypeptide is Serine--tRNA ligase (Bacillus cereus (strain ATCC 10987 / NRS 248)).